We begin with the raw amino-acid sequence, 241 residues long: Lactate utilization protein C (241 aa).

This sequence belongs to the LutC/YkgG family.

Its function is as follows. Is involved in L-lactate degradation and allows cells to grow with lactate as the sole carbon source. This Geobacillus sp. (strain WCH70) protein is Lactate utilization protein C.